The sequence spans 69 residues: uncharacterized protein (69 aa).

This is an uncharacterized protein from Vaccinia virus (strain Copenhagen) (VACV).